A 115-amino-acid polypeptide reads, in one-letter code: U3-lycotoxin-Ls1a (115 aa).

The signal sequence occupies residues 1–20 (MKFVLLFGVLLVTLFSYSSA). A propeptide spanning residues 21-44 (EMLDDFDQADEDELLSLIEKEEAR) is cleaved from the precursor. Cystine bridges form between cysteine 48–cysteine 63, cysteine 55–cysteine 72, cysteine 62–cysteine 87, and cysteine 74–cysteine 85.

Belongs to the neurotoxin 19 (CSTX) family. 01 subfamily. Expressed by the venom gland.

It is found in the secreted. This is U3-lycotoxin-Ls1a from Lycosa singoriensis (Wolf spider).